Here is a 277-residue protein sequence, read N- to C-terminus: Thymidylate synthase (277 aa).

Residue arginine 21 coordinates dUMP. Histidine 51 lines the (6R)-5,10-methylene-5,6,7,8-tetrahydrofolate pocket. Position 139–140 (139–140) interacts with dUMP; sequence RR. Catalysis depends on cysteine 159, which acts as the Nucleophile. DUMP is bound by residues 179-182, asparagine 190, and 220-222; these read RSAD and HIY. A (6R)-5,10-methylene-5,6,7,8-tetrahydrofolate-binding site is contributed by aspartate 182. Alanine 276 lines the (6R)-5,10-methylene-5,6,7,8-tetrahydrofolate pocket.

Belongs to the thymidylate synthase family. Bacterial-type ThyA subfamily. As to quaternary structure, homodimer.

Its subcellular location is the cytoplasm. The enzyme catalyses dUMP + (6R)-5,10-methylene-5,6,7,8-tetrahydrofolate = 7,8-dihydrofolate + dTMP. It functions in the pathway pyrimidine metabolism; dTTP biosynthesis. In terms of biological role, catalyzes the reductive methylation of 2'-deoxyuridine-5'-monophosphate (dUMP) to 2'-deoxythymidine-5'-monophosphate (dTMP) while utilizing 5,10-methylenetetrahydrofolate (mTHF) as the methyl donor and reductant in the reaction, yielding dihydrofolate (DHF) as a by-product. This enzymatic reaction provides an intracellular de novo source of dTMP, an essential precursor for DNA biosynthesis. This chain is Thymidylate synthase, found in Roseobacter denitrificans (strain ATCC 33942 / OCh 114) (Erythrobacter sp. (strain OCh 114)).